An 863-amino-acid chain; its full sequence is uncharacterized protein (863 aa).

The first 29 residues, M1–A29, serve as a signal peptide directing secretion. One can recognise an Autotransporter domain in the interval G595 to F863.

It is found in the cell outer membrane. This is an uncharacterized protein from Escherichia coli (strain K12).